The primary structure comprises 289 residues: 4-hydroxybenzoate octaprenyltransferase (289 aa).

Transmembrane regions (helical) follow at residues 21–40 (PIGT…LAAG), 95–115 (VLAL…TMNS), 116–136 (LTIA…FMKR), 138–158 (IPIP…MAYA), 161–181 (ANAL…WTIA), 213–233 (IIGV…QLMG), 236–256 (AWYY…QRLI), and 268–288 (FLNN…NYLL).

Belongs to the UbiA prenyltransferase family. Requires Mg(2+) as cofactor.

It localises to the cell inner membrane. It catalyses the reaction all-trans-octaprenyl diphosphate + 4-hydroxybenzoate = 4-hydroxy-3-(all-trans-octaprenyl)benzoate + diphosphate. Its pathway is cofactor biosynthesis; ubiquinone biosynthesis. In terms of biological role, catalyzes the prenylation of para-hydroxybenzoate (PHB) with an all-trans polyprenyl group. Mediates the second step in the final reaction sequence of ubiquinone-8 (UQ-8) biosynthesis, which is the condensation of the polyisoprenoid side chain with PHB, generating the first membrane-bound Q intermediate 3-octaprenyl-4-hydroxybenzoate. In Aeromonas salmonicida (strain A449), this protein is 4-hydroxybenzoate octaprenyltransferase.